We begin with the raw amino-acid sequence, 1031 residues long: Kinesin heavy chain (1031 aa).

Residues 8–325 form the Kinesin motor domain; sequence NIKVVCRVRP…LMFGQRAKTI (318 aa). Residue 84 to 91 participates in ATP binding; the sequence is GQTSSGKT. Positions 393 to 857 form a coiled coil; it reads PKQMTVHVSE…RDNADLRCEL (465 aa). The segment covering 673 to 686 has biased composition (basic and acidic residues); the sequence is TDQEDKKREEEDKM. Disordered stretches follow at residues 673–692 and 906–1031; these read TDQE…ATEM and RNFA…EQGS. Residues 858–1031 form a globular region; sequence PKLERRLRAT…PLTTSGEQGS (174 aa). Positions 932-949 are enriched in gly residues; it reads GSTGIRGGGYSGIRGGGS. 2 stretches are compositionally biased toward polar residues: residues 964–977 and 1014–1031; these read SHNN…NPND and RNNT…EQGS.

Belongs to the TRAFAC class myosin-kinesin ATPase superfamily. Kinesin family. Kinesin subfamily. Oligomer composed of two heavy chains and two light chains.

Its subcellular location is the cytoplasm. The protein localises to the cytoskeleton. Functionally, kinesin is a microtubule-associated force-producing protein that may play a role in organelle transport. In Strongylocentrotus purpuratus (Purple sea urchin), this protein is Kinesin heavy chain.